The chain runs to 467 residues: Probable glutamate decarboxylase gamma (467 aa).

Position 278 is an N6-(pyridoxal phosphate)lysine (Lys278).

This sequence belongs to the group II decarboxylase family. Requires pyridoxal 5'-phosphate as cofactor.

The catalysed reaction is L-glutamate + H(+) = 4-aminobutanoate + CO2. The protein is Probable glutamate decarboxylase gamma of Listeria innocua serovar 6a (strain ATCC BAA-680 / CLIP 11262).